A 92-amino-acid chain; its full sequence is Protein AC152 (92 aa).

Its function is as follows. Acts as a transactivator of AC102 and HE65 genes. Therefore, participates in the global recruitment of G-actin to the host nucleus. The protein is Protein AC152 (AC152) of Autographa californica nuclear polyhedrosis virus (AcMNPV).